The following is a 206-amino-acid chain: Dephospho-CoA kinase (206 aa).

A DPCK domain is found at 4 to 204 (IVGLTGGIGS…QFYLQQAENK (201 aa)). 12–17 (GSGKTT) contacts ATP.

The protein belongs to the CoaE family.

It localises to the cytoplasm. The enzyme catalyses 3'-dephospho-CoA + ATP = ADP + CoA + H(+). The protein operates within cofactor biosynthesis; coenzyme A biosynthesis; CoA from (R)-pantothenate: step 5/5. Catalyzes the phosphorylation of the 3'-hydroxyl group of dephosphocoenzyme A to form coenzyme A. The polypeptide is Dephospho-CoA kinase (Haemophilus influenzae (strain ATCC 51907 / DSM 11121 / KW20 / Rd)).